Consider the following 926-residue polypeptide: MPHKIGFVVVSSSGHEDGFSARELMIHAPTVSGWRSPKFCQFPQEIVLQMVERCRVRKLQLLAHQYMISSKVEFYISESLPEYLVPYQAERFRRLGYVSLCDNEKTGCKARELKSVYVDAVGQFLKLIFHQNHANKYNIYNQVALVAINIIGDPADLGDESNITSREKLIDHYLGHSPHNPEDPALDGTFSGRSDYISPLDDLAFDMYQDPEVAQIIRRLDERKREAVKKERYDHAKKLKQAIADLQKVGERLGRYEVEKRCAVEKEDYDLAKEKKQQMARYRAQVYEQLELHGLLQGEPEMQRPFALPLQPLASPSSPQHWKAVSSLPRTEKLVAEDSFAGPVLQEKPSASSPQHSAVDPSPPAAGHAPRSHTEVLPYDERPLPVTRKQLGEASAEAEVKEADSDVRRRGVAGEPEPLTEKALREASAAIDTLGEALVAGAYSKMWSCREDALLALYKKLMEMPVGTQKEDLKNMLRASVFLIRRAIKDIVASVFQASLKLLKMIITQYIPKHKLGKLDTTHCVERAFPLLLARAGDSSARLRVMALNFIQEMALFKEVKSLQLIPSYLVQPLKANASVHLAMSQVDLLARLLRDLGTESSGFTVDNVMKFAVSALEHRVYEVRETAVRIILDMYRQHPALTLEHLPPDDSATRRNLLYKAIFEGFAKIDGSVLPTEAEVRAQKRVATKEAEKQKKEEMKALQGQSGELRETQAGVQEKESEAVKLRNQDPQGRKAVLPDTPEIPANHFLDNLCIFCGERNESFTEEGLDLHYWKHCLMLTRCDHCRQVVEISSLTEHLLTECDRRDGFGKCPRCSEAIPKEELPGHIKTKECSPAKPEKVANHCPLCHENFAPGEEAWKVHLMGPAGCTMNLRKTHVLYKATAPQQGKGPAAAKSSTSAPKVGSKIPTPKGGLSKSSSRTYMRR.

Residues 212–279 (EVAQIIRRLD…DLAKEKKQQM (68 aa)) adopt a coiled-coil conformation. The disordered stretch occupies residues 345 to 419 (LQEKPSASSP…RGVAGEPEPL (75 aa)). A compositionally biased stretch (basic and acidic residues) spans 398–409 (AEVKEADSDVRR). HEAT repeat units lie at residues 522 to 558 (THCV…ALFK) and 603 to 639 (GFTV…YRQH). Residues 678 to 730 (EAEVRAQKRVATKEAEKQKKEEMKALQGQSGELRETQAGVQEKESEAVKLRNQ) are a coiled coil. 2 stretches are compositionally biased toward basic and acidic residues: residues 690–701 (KEAEKQKKEEMK) and 718–729 (QEKESEAVKLRN). 2 disordered regions span residues 690–741 (KEAE…VLPD) and 885–926 (APQQ…YMRR). Residues 889 to 903 (GKGPAAAKSSTSAPK) are compositionally biased toward low complexity. Residues 916 to 926 (SKSSSRTYMRR) show a composition bias toward polar residues.

Interacts with CCP110 and CEP97. Interacts with ARMC9, TOGARAM1, CCDC66 and CSPP1.

The protein localises to the cell projection. Its subcellular location is the cilium. It localises to the cytoplasm. It is found in the cytoskeleton. The protein resides in the microtubule organizing center. The protein localises to the centrosome. Its subcellular location is the centriole. It localises to the spindle pole. Required for ciliogenesis and for structural integrity at the ciliary tip. This Mus musculus (Mouse) protein is Centrosomal protein of 104 kDa (Cep104).